The following is a 105-amino-acid chain: Mini zinc finger protein 1 (105 aa).

Positions 1–29 are disordered; sequence MGPQQDRSAAKPYANGSTAAAAAAGRKEN. A ZF-HD dimerization-type; degenerate zinc finger spans residues 35-84; sequence YRECQRNHAASIGGHAVDGCREFMASGAEGTAAALLCAACGCHRSFHRRE.

Homo- and heterodimers.

It localises to the cytoplasm. Inhibits zinc finger homeodomain (ZHD) transcription factors, by interacting with them to prevent both their nuclear localization and their DNA-binding properties. This Oryza sativa subsp. indica (Rice) protein is Mini zinc finger protein 1 (MIF1).